The chain runs to 200 residues: Transcriptional repressor NrdR (200 aa).

A zinc finger spans residues 3–34 (CPFCQNPDTKVIDTRISDDGHSIRRRRECPNC). The ATP-cone domain occupies 46–136 (LLVKKRSGNV…VYQNFEDLED (91 aa)).

The protein belongs to the NrdR family. It depends on Zn(2+) as a cofactor.

Functionally, negatively regulates transcription of bacterial ribonucleotide reductase nrd genes and operons by binding to NrdR-boxes. This is Transcriptional repressor NrdR from Bifidobacterium animalis subsp. lactis (strain AD011).